A 244-amino-acid polypeptide reads, in one-letter code: Probable transcriptional regulatory protein XfasM23_0940 (244 aa).

It belongs to the TACO1 family.

The protein resides in the cytoplasm. This Xylella fastidiosa (strain M23) protein is Probable transcriptional regulatory protein XfasM23_0940.